Consider the following 333-residue polypeptide: Protein-methionine-sulfoxide reductase catalytic subunit MsrP (333 aa).

Positions 1-43 (MHKHRKPTEADVTPESLFYQRRRILKALGISAAALSLPFSAQA) form a signal peptide, tat-type signal. Mo-molybdopterin-binding positions include Asn87, 90 to 91 (YE), Cys145, Thr180, Asn232, Arg237, and 248 to 250 (NIK).

It belongs to the MsrP family. As to quaternary structure, heterodimer of a catalytic subunit (MsrP) and a heme-binding subunit (MsrQ). Mo-molybdopterin is required as a cofactor. Post-translationally, predicted to be exported by the Tat system. The position of the signal peptide cleavage has not been experimentally proven.

It is found in the periplasm. The enzyme catalyses L-methionyl-[protein] + a quinone + H2O = L-methionyl-(S)-S-oxide-[protein] + a quinol. It carries out the reaction L-methionyl-[protein] + a quinone + H2O = L-methionyl-(R)-S-oxide-[protein] + a quinol. Functionally, part of the MsrPQ system that repairs oxidized periplasmic proteins containing methionine sulfoxide residues (Met-O), using respiratory chain electrons. Thus protects these proteins from oxidative-stress damage caused by reactive species of oxygen and chlorine generated by the host defense mechanisms. MsrPQ is essential for the maintenance of envelope integrity under bleach stress, rescuing a wide series of structurally unrelated periplasmic proteins from methionine oxidation. The catalytic subunit MsrP is non-stereospecific, being able to reduce both (R-) and (S-) diastereoisomers of methionine sulfoxide. The protein is Protein-methionine-sulfoxide reductase catalytic subunit MsrP of Pectobacterium carotovorum subsp. carotovorum (strain PC1).